Reading from the N-terminus, the 466-residue chain is 3-isopropylmalate dehydratase large subunit (466 aa).

Residues C347, C407, and C410 each contribute to the [4Fe-4S] cluster site.

It belongs to the aconitase/IPM isomerase family. LeuC type 1 subfamily. As to quaternary structure, heterodimer of LeuC and LeuD. It depends on [4Fe-4S] cluster as a cofactor.

The enzyme catalyses (2R,3S)-3-isopropylmalate = (2S)-2-isopropylmalate. Its pathway is amino-acid biosynthesis; L-leucine biosynthesis; L-leucine from 3-methyl-2-oxobutanoate: step 2/4. In terms of biological role, catalyzes the isomerization between 2-isopropylmalate and 3-isopropylmalate, via the formation of 2-isopropylmaleate. The polypeptide is 3-isopropylmalate dehydratase large subunit (Blochmanniella pennsylvanica (strain BPEN)).